A 206-amino-acid chain; its full sequence is Small ribosomal subunit protein uS4 (206 aa).

Residues 96–157 form the S4 RNA-binding domain; the sequence is GRLDNVVYRM…KAKKQSRVRA (62 aa).

Belongs to the universal ribosomal protein uS4 family. Part of the 30S ribosomal subunit. Contacts protein S5. The interaction surface between S4 and S5 is involved in control of translational fidelity.

One of the primary rRNA binding proteins, it binds directly to 16S rRNA where it nucleates assembly of the body of the 30S subunit. In terms of biological role, with S5 and S12 plays an important role in translational accuracy. The sequence is that of Small ribosomal subunit protein uS4 from Sodalis glossinidius (strain morsitans).